The chain runs to 66 residues: UPF0337 protein SAG0619 (66 aa).

Positions 1 to 22 (MSQEKLKSKLDQAKGGAKEGFG) are disordered.

The protein belongs to the UPF0337 (CsbD) family.

This chain is UPF0337 protein SAG0619, found in Streptococcus agalactiae serotype V (strain ATCC BAA-611 / 2603 V/R).